Here is a 350-residue protein sequence, read N- to C-terminus: Uroporphyrinogen decarboxylase (350 aa).

Residues 28 to 32 (RQAGR), Asp-78, Tyr-155, Ser-210, and His-325 each bind substrate.

It belongs to the uroporphyrinogen decarboxylase family. As to quaternary structure, homodimer.

The protein localises to the cytoplasm. The enzyme catalyses uroporphyrinogen III + 4 H(+) = coproporphyrinogen III + 4 CO2. Its pathway is porphyrin-containing compound metabolism; protoporphyrin-IX biosynthesis; coproporphyrinogen-III from 5-aminolevulinate: step 4/4. Functionally, catalyzes the decarboxylation of four acetate groups of uroporphyrinogen-III to yield coproporphyrinogen-III. This Picosynechococcus sp. (strain ATCC 27264 / PCC 7002 / PR-6) (Agmenellum quadruplicatum) protein is Uroporphyrinogen decarboxylase.